The primary structure comprises 216 residues: Nucleoside triphosphate pyrophosphatase (216 aa).

The active-site Proton acceptor is Asp82.

It belongs to the Maf family. The cofactor is a divalent metal cation.

The protein resides in the cytoplasm. The enzyme catalyses a ribonucleoside 5'-triphosphate + H2O = a ribonucleoside 5'-phosphate + diphosphate + H(+). It catalyses the reaction a 2'-deoxyribonucleoside 5'-triphosphate + H2O = a 2'-deoxyribonucleoside 5'-phosphate + diphosphate + H(+). In terms of biological role, nucleoside triphosphate pyrophosphatase. May have a dual role in cell division arrest and in preventing the incorporation of modified nucleotides into cellular nucleic acids. The polypeptide is Nucleoside triphosphate pyrophosphatase (Mycobacterium ulcerans (strain Agy99)).